The primary structure comprises 853 residues: DNA mismatch repair protein MutS (853 aa).

614-621 (GPNMGGKS) is a binding site for ATP.

It belongs to the DNA mismatch repair MutS family.

In terms of biological role, this protein is involved in the repair of mismatches in DNA. It is possible that it carries out the mismatch recognition step. This protein has a weak ATPase activity. This Klebsiella pneumoniae subsp. pneumoniae (strain ATCC 700721 / MGH 78578) protein is DNA mismatch repair protein MutS.